Here is a 1274-residue protein sequence, read N- to C-terminus: Paired amphipathic helix protein Sin3a (1274 aa).

Disordered stretches follow at residues 1–26 (MKRRLDDQESPVYAAQQRRIPGSTEA) and 85–110 (HHHPTAVQPHGGQVVQSHAHPAPPVA). At Ser-10 the chain carries Phosphoserine. The PAH 1 domain maps to 119 to 189 (QRLKVEDALS…MGFNTFLPPG (71 aa)). The interaction with HCFC1 stretch occupies residues 119–196 (QRLKVEDALS…PPGYKIEVQT (78 aa)). Residues Lys-122 and Lys-134 each participate in a glycyl lysine isopeptide (Lys-Gly) (interchain with G-Cter in SUMO2) cross-link. The tract at residues 205-297 (PGQVHQIPTH…ISLGTAPSLQ (93 aa)) is disordered. The interval 205-479 (PGQVHQIPTH…KVRKALRSAE (275 aa)) is interaction with REST. Low complexity predominate over residues 228 to 237 (SQPSSQSAPT). Positions 252–266 (KPSQLQAHTPASQQT) are enriched in polar residues. Positions 267–282 (PPLPPYASPRSPPVQP) are enriched in pro residues. Phosphoserine is present on Ser-277. Thr-284 bears the Phosphothreonine mark. Residues 284-297 (TPVTISLGTAPSLQ) are compositionally biased toward polar residues. The region spanning 300–383 (QPVEFNHAIN…SEFGQFLPDA (84 aa)) is the PAH 2 domain. A disordered region spans residues 398 to 443 (DSVRNDHGGTVKKPQLNNKPQRPSQNGCQIRRHSGTGATPPVKKKP). Residues 412-425 (QLNNKPQRPSQNGC) show a composition bias toward polar residues. The PAH 3 domain occupies 457-526 (SKHGVGTESL…NWFKNFLGYK (70 aa)). The interaction with SAP30 stretch occupies residues 459 to 526 (HGVGTESLFF…NWFKNFLGYK (68 aa)). At Lys-470 the chain carries N6-acetyllysine. Residues 524-851 (GYKESVHLES…EMDVDEATGA (328 aa)) form an interaction with NCOR1 region. The segment at 525 to 660 (YKESVHLESF…KFRLDNTLGG (136 aa)) is interactions with SUDS3 and SAP130. A Glycyl lysine isopeptide (Lys-Gly) (interchain with G-Cter in SUMO2) cross-link involves residue Lys-564. The tract at residues 688–830 (NPSIAVPIVL…IPDLLFAQRG (143 aa)) is interactions with HDAC1 and ARID4B. Ser-833 bears the Phosphoserine mark. The span at 835-847 (VEEEEEEEMDVDE) shows a compositional bias: acidic residues. The interval 835 to 865 (VEEEEEEEMDVDEATGAPKKHNGVGGSPPKS) is disordered. A Phosphoserine modification is found at Ser-861. N6-acetyllysine is present on residues Lys-866 and Lys-876. An interaction with OGT region spans residues 889–968 (VNNNWYIFMR…YYPAFLDMVR (80 aa)). Positions 904-933 (CLRLLRICSQAERQIEEENREREWEREVLG) form a coiled coil. Residues Ser-941, Ser-1090, and Ser-1113 each carry the phosphoserine modification. Positions 1137–1157 (CQRGREQQEKEGKEGNSKKTM) are disordered. Over residues 1139-1157 (RGREQQEKEGKEGNSKKTM) the composition is skewed to basic and acidic residues.

Interacts with ARID4B, BRMS1L, HCFC1, HDAC1, HDAC2, MXI1, SAP30L, SAP130, SFPQ and TOPORS. Interacts with OGT (via TPRs 1-6); the interaction mediates transcriptional repression in parallel with histone deacetylase. Interacts with BAZ2A, MXD1, MXD3, MXD4, MBD2, DACH1, NCOR1, NR4A2, REST, RLIM, SAP30, SETDB1, SMYD2, and SUDS3. Interacts with PHF12 in a complex composed of HDAC1, PHF12 and SAP30. Interacts with TET1; the interaction recruits SIN3A to gene promoters. The large PER complex involved in the histone deacetylation is composed of at least HDAC1, PER2, SFPQ and SIN3A. Interacts with KLF11. Interacts with PPHLN1. Found in a complex with YY1, GON4L and HDAC1. Interacts (via PAH2) with FOXK1. Interacts with FOXK2. Found in a complex composed of at least SINHCAF, SIN3A, HDAC1, SAP30, RBBP4, OGT and TET1. Interacts with SINHCAF. Interacts with SPHK2. In terms of processing, SUMO1 sumoylated by TOPORS. Probably desumoylated by SENP2. As to expression, widely expressed. Highest levels in testis, lung and thymus. Expressed at relatively high levels throughout brain development. In adult mice, expression is high in neurogenic regions such as the subventricular zone, rostral migratory stream, olfactory bulb and dentate gyrus.

The protein resides in the nucleus. It is found in the nucleolus. Its function is as follows. Acts as a transcriptional repressor. Corepressor for REST. Interacts with MXI1 to repress MYC responsive genes and antagonize MYC oncogenic activities. Also interacts with MXD1-MAX heterodimers to repress transcription by tethering SIN3A to DNA. Acts cooperatively with OGT to repress transcription in parallel with histone deacetylation. Involved in the control of the circadian rhythms. Required for the transcriptional repression of circadian target genes, such as PER1, mediated by the large PER complex through histone deacetylation. Cooperates with FOXK1 to regulate cell cycle progression probably by repressing cell cycle inhibitor genes expression. Required for cortical neuron differentiation and callosal axon elongation. The protein is Paired amphipathic helix protein Sin3a (Sin3a) of Mus musculus (Mouse).